The chain runs to 741 residues: Catalase-peroxidase 2 (741 aa).

An N-terminal signal peptide occupies residues Met1–Ala28. The tryptophyl-tyrosyl-methioninium (Trp-Tyr) (with M-254) cross-link spans Trp107–Tyr228. The Proton acceptor role is filled by His108. A cross-link (tryptophyl-tyrosyl-methioninium (Tyr-Met) (with W-107)) is located at residues Tyr228 to Met254. Residue His269 participates in heme b binding.

It belongs to the peroxidase family. Peroxidase/catalase subfamily. In terms of assembly, homodimer or homotetramer. Heme b serves as cofactor. Post-translationally, formation of the three residue Trp-Tyr-Met cross-link is important for the catalase, but not the peroxidase activity of the enzyme.

The catalysed reaction is H2O2 + AH2 = A + 2 H2O. The enzyme catalyses 2 H2O2 = O2 + 2 H2O. Functionally, bifunctional enzyme with both catalase and broad-spectrum peroxidase activity. This Burkholderia vietnamiensis (strain G4 / LMG 22486) (Burkholderia cepacia (strain R1808)) protein is Catalase-peroxidase 2.